The primary structure comprises 306 residues: tRNA pseudouridine synthase B (306 aa).

The active-site Nucleophile is the Asp-47.

This sequence belongs to the pseudouridine synthase TruB family. Type 1 subfamily.

The enzyme catalyses uridine(55) in tRNA = pseudouridine(55) in tRNA. Its function is as follows. Responsible for synthesis of pseudouridine from uracil-55 in the psi GC loop of transfer RNAs. This Neisseria meningitidis serogroup A / serotype 4A (strain DSM 15465 / Z2491) protein is tRNA pseudouridine synthase B.